A 696-amino-acid chain; its full sequence is D-(-)-3-hydroxybutyrate oligomer hydrolase (696 aa).

Positions 1-26 are cleaved as a signal peptide; sequence MTKLGWGRRVVWGAALAAVAMLGACN. S309 serves as the catalytic Charge relay system.

It belongs to the D-(-)-3-hydroxybutyrate oligomer hydrolase family.

It is found in the secreted. The enzyme catalyses (3R)-hydroxybutanoate dimer + H2O = 2 (R)-3-hydroxybutanoate + H(+). It participates in lipid metabolism; butanoate metabolism. Participates in the degradation of poly-3-hydroxybutyrate (PHB). It works downstream of poly(3-hydroxybutyrate) depolymerase, hydrolyzing D(-)-3-hydroxybutyrate oligomers of various length (3HB-oligomers) into 3HB-monomers. In Burkholderia cenocepacia (strain HI2424), this protein is D-(-)-3-hydroxybutyrate oligomer hydrolase.